A 336-amino-acid polypeptide reads, in one-letter code: Holliday junction branch migration complex subunit RuvB (336 aa).

The large ATPase domain (RuvB-L) stretch occupies residues 4–184; that stretch reads ADRLISAASN…FGIVQRLEFY (181 aa). ATP contacts are provided by residues Ile23, Arg24, Gly65, Lys68, Thr69, Thr70, 131 to 133, Arg174, Tyr184, and Arg221; that span reads EDY. Thr69 is a Mg(2+) binding site. Positions 185–255 are small ATPAse domain (RuvB-S); that stretch reads QVPDLQYIVG…VAAQALDMLN (71 aa). Residues 258–336 form a head domain (RuvB-H) region; the sequence is AEGFDYMDRK…HFGITPPEMP (79 aa). Residues Arg294, Arg313, and Arg318 each coordinate DNA.

It belongs to the RuvB family. In terms of assembly, homohexamer. Forms an RuvA(8)-RuvB(12)-Holliday junction (HJ) complex. HJ DNA is sandwiched between 2 RuvA tetramers; dsDNA enters through RuvA and exits via RuvB. An RuvB hexamer assembles on each DNA strand where it exits the tetramer. Each RuvB hexamer is contacted by two RuvA subunits (via domain III) on 2 adjacent RuvB subunits; this complex drives branch migration. In the full resolvosome a probable DNA-RuvA(4)-RuvB(12)-RuvC(2) complex forms which resolves the HJ.

It localises to the cytoplasm. It catalyses the reaction ATP + H2O = ADP + phosphate + H(+). Functionally, the RuvA-RuvB-RuvC complex processes Holliday junction (HJ) DNA during genetic recombination and DNA repair, while the RuvA-RuvB complex plays an important role in the rescue of blocked DNA replication forks via replication fork reversal (RFR). RuvA specifically binds to HJ cruciform DNA, conferring on it an open structure. The RuvB hexamer acts as an ATP-dependent pump, pulling dsDNA into and through the RuvAB complex. RuvB forms 2 homohexamers on either side of HJ DNA bound by 1 or 2 RuvA tetramers; 4 subunits per hexamer contact DNA at a time. Coordinated motions by a converter formed by DNA-disengaged RuvB subunits stimulates ATP hydrolysis and nucleotide exchange. Immobilization of the converter enables RuvB to convert the ATP-contained energy into a lever motion, pulling 2 nucleotides of DNA out of the RuvA tetramer per ATP hydrolyzed, thus driving DNA branch migration. The RuvB motors rotate together with the DNA substrate, which together with the progressing nucleotide cycle form the mechanistic basis for DNA recombination by continuous HJ branch migration. Branch migration allows RuvC to scan DNA until it finds its consensus sequence, where it cleaves and resolves cruciform DNA. The chain is Holliday junction branch migration complex subunit RuvB from Enterobacter sp. (strain 638).